Reading from the N-terminus, the 181-residue chain is ATP synthase subunit b (181 aa).

The helical transmembrane segment at 24-44 (LFPNLPNFIAHLLATIILVIV) threads the bilayer.

Belongs to the ATPase B chain family. In terms of assembly, F-type ATPases have 2 components, F(1) - the catalytic core - and F(0) - the membrane proton channel. F(1) has five subunits: alpha(3), beta(3), gamma(1), delta(1), epsilon(1). F(0) has three main subunits: a(1), b(2) and c(10-14). The alpha and beta chains form an alternating ring which encloses part of the gamma chain. F(1) is attached to F(0) by a central stalk formed by the gamma and epsilon chains, while a peripheral stalk is formed by the delta and b chains.

It is found in the cell membrane. In terms of biological role, f(1)F(0) ATP synthase produces ATP from ADP in the presence of a proton or sodium gradient. F-type ATPases consist of two structural domains, F(1) containing the extramembraneous catalytic core and F(0) containing the membrane proton channel, linked together by a central stalk and a peripheral stalk. During catalysis, ATP synthesis in the catalytic domain of F(1) is coupled via a rotary mechanism of the central stalk subunits to proton translocation. Its function is as follows. Component of the F(0) channel, it forms part of the peripheral stalk, linking F(1) to F(0). The chain is ATP synthase subunit b from Mycoplasma mycoides subsp. mycoides SC (strain CCUG 32753 / NCTC 10114 / PG1).